The chain runs to 380 residues: Chorismate synthase (380 aa).

Arg49 is a binding site for NADP(+). FMN-binding positions include Gly288, Lys303–Ser307, and Arg330.

Belongs to the chorismate synthase family. FMNH2 serves as cofactor.

It catalyses the reaction 5-O-(1-carboxyvinyl)-3-phosphoshikimate = chorismate + phosphate. It participates in metabolic intermediate biosynthesis; chorismate biosynthesis; chorismate from D-erythrose 4-phosphate and phosphoenolpyruvate: step 7/7. In terms of biological role, catalyzes the anti-1,4-elimination of the C-3 phosphate and the C-6 proR hydrogen from 5-enolpyruvylshikimate-3-phosphate (EPSP) to yield chorismate, which is the branch point compound that serves as the starting substrate for the three terminal pathways of aromatic amino acid biosynthesis. This reaction introduces a second double bond into the aromatic ring system. The chain is Chorismate synthase from Aeropyrum pernix (strain ATCC 700893 / DSM 11879 / JCM 9820 / NBRC 100138 / K1).